We begin with the raw amino-acid sequence, 185 residues long: Ribosome-recycling factor (185 aa).

The protein belongs to the RRF family.

Its subcellular location is the cytoplasm. In terms of biological role, responsible for the release of ribosomes from messenger RNA at the termination of protein biosynthesis. May increase the efficiency of translation by recycling ribosomes from one round of translation to another. The protein is Ribosome-recycling factor of Lactococcus lactis subsp. cremoris (strain SK11).